A 396-amino-acid chain; its full sequence is Phosphoglycerate kinase (396 aa).

Substrate is bound by residues 21–23 (DFN), R36, 59–62 (HLGK), R119, and R156. ATP-binding positions include K206, G294, E325, and 352–355 (GGDS).

Belongs to the phosphoglycerate kinase family. As to quaternary structure, monomer.

It is found in the cytoplasm. The catalysed reaction is (2R)-3-phosphoglycerate + ATP = (2R)-3-phospho-glyceroyl phosphate + ADP. It functions in the pathway carbohydrate degradation; glycolysis; pyruvate from D-glyceraldehyde 3-phosphate: step 2/5. This chain is Phosphoglycerate kinase, found in Staphylococcus aureus (strain bovine RF122 / ET3-1).